Consider the following 39-residue polypeptide: U-limacoditoxin(13)-As54 (39 aa).

A signal peptide spans 1 to 23; it reads MSKYIVLLVVSAIALLQFSMIEC. A Phenylalanine amide modification is found at phenylalanine 37.

This sequence belongs to the FARP (FMRFamide related peptide) family. Expressed by the venom secretory cell of the spine. The spine is a cuticular structure containing a single large nucleated venom-secreting cell at its base. It is an independent unit capable of producing, storing and injecting venom. On the back of A.stimulea caterpillars, spines are grouped together by 50 to 100 to form scoli, of which there are eight.

It is found in the secreted. Strongly activates (at 30 uM) the human neuropeptide FF receptor 1 (NPFF1R), a G-protein coupled receptor, with an effect that is equipotent to the endogenous RFRP-1 ligand in activating NPFFR1. Is toxic when injected into Drosophila melanogaster. Also shows a moderate anthelmintic activity against the parasitic nematode H.contortus (drug susceptible Kirby isolate) (IC(50)=20.1 uM). The protein is U-limacoditoxin(13)-As54 of Acharia stimulea (Saddleback caterpillar moth).